The primary structure comprises 374 residues: Alcohol dehydrogenase S chain (374 aa).

Ser2 carries the N-acetylserine modification. Zn(2+) contacts are provided by Cys47, His68, Cys98, Cys101, Cys104, Cys112, and Cys174. Residues 199–204 (GLGGVG), Asp223, Lys228, 292–294 (VGV), and Arg369 each bind NAD(+).

This sequence belongs to the zinc-containing alcohol dehydrogenase family. Class-I subfamily. As to quaternary structure, dimer of identical or non-identical chains of two types (E and S) coded by 2 separate genes at different loci. The cofactor is Zn(2+).

The protein localises to the cytoplasm. The enzyme catalyses a primary alcohol + NAD(+) = an aldehyde + NADH + H(+). It catalyses the reaction a secondary alcohol + NAD(+) = a ketone + NADH + H(+). In Equus caballus (Horse), this protein is Alcohol dehydrogenase S chain.